A 1132-amino-acid polypeptide reads, in one-letter code: MIQESSPDALAAAAAIGNALSYNGRTVDKSKIPQYNQSFTSRTTSIAGINRYTMLSNSRTNSRMLLMNGNVRQYSKRTSSLPNQGHKNTSNNSAGRRQHRAHEDAETTFREFGGKQSSKVLNISSSTGQNSKSRTTSLGNSGSTIRTIKKYIPGPRGLMAVEVPVEVEPPRYSLSNRSNQRGGRAYSLPTRNNKTSLMHRNKTTKKAGSQEKKSESGGKSKNDYHGKVLSKMHTTSLKQRHNNVPLIPTTMNEETEQELQEDLHDPLEFKPMIISDDENSFIEPSVLDRSIPKKDKSGLSGREKKEEIETLLKEVHSLEEKISNIEIAKLNEEEREQSLILELRKVKLDEERRMELLKRELNIVKENADLEAQELKLIESKRKQHFHKGQEVASEVKSITIRQPTLSEPKPAYVPPEDVEKEPSTLSNQTQNIENAENIDSVDAEGNLVDPILLGSLNNSNFHMNSDNEVRCIADSNSLTGSELSDYNYIEGSATDLRATAKTSVESEIGGNQVGLKIPQDDDSEKQEERTKGKKSGLVDTNCFLVQKEDQEEALSDNEPESSEKFPSTSGIENVKLEDETGSVMDKNNGPNNDKDDDDDKDNDNDDDDDKDDDVNDDDKDENVDDDENVDDDDDDDDDDDDEYHDSYDVIMRDPVQIEQDISDVPSLKHPSEYSTETEDNKKKEQNSENAEVSQSGTNMAKYLRGANPYLTNTSSDTFSLDSENVNSKSSTDTTRVAPDLLKSSLQPQLRSDLKQSAVPSSTSSSIYSIETSPNIDSSTGKTASNTKTNSHGPPTSISKQKYDQSSSHQIPVMSPKRLDDKRKITNRSCLRTLRGSSNEATLSHNIVYPASDSSSSPPYHSKKPSNPPSSGNLASHEASKCFPKAPQASTTSRRLPDHVPLYIDKNNSALYPKEPPARKSSFEKERPAKDNLGFRSMSLREPLITKNATATAAENLDVEEKKEKGGHVSRKSWTFGLPSPLKRRTSHSTHTTNETEIVNPMTNFKNKTNENDMPILANKKSCNNDDSSPYTASSMNTNDVSEAGTEGHRFSLFGNKSQLSNRNISGGTATLESSNPDLPTALPLSVPVTIIDKNGEIHKLHNDDAAIKDKSHDRHGHSKFGRKLKKIFGRK.

The segment covering 76 to 95 has biased composition (polar residues); it reads KRTSSLPNQGHKNTSNNSAG. Disordered regions lie at residues 76 to 142 and 171 to 225; these read KRTS…GNSG and RYSL…NDYH. Basic and acidic residues predominate over residues 101–113; it reads AHEDAETTFREFG. Polar residues predominate over residues 115-142; that stretch reads KQSSKVLNISSSTGQNSKSRTTSLGNSG. The residue at position 137 (Ser137) is a Phosphoserine. The span at 208 to 225 shows a compositional bias: basic and acidic residues; sequence GSQEKKSESGGKSKNDYH. Ser280 carries the phosphoserine modification. The tract at residues 404–429 is disordered; it reads PTLSEPKPAYVPPEDVEKEPSTLSNQ. Phosphoserine occurs at positions 504 and 507. Disordered stretches follow at residues 510 to 938 and 961 to 993; these read GGNQ…FRSM and EKKE…THTT. A Glycyl lysine isopeptide (Lys-Gly) (interchain with G-Cter in ubiquitin) cross-link involves residue Lys526. Acidic residues-rich tracts occupy residues 550 to 561 and 595 to 644; these read DQEEALSDNEPE and KDDD…DDEY. At Ser556 the chain carries Phosphoserine. 2 stretches are compositionally biased toward polar residues: residues 688-699 and 710-735; these read SENAEVSQSGTN and YLTN…TDTT. Lys743 participates in a covalent cross-link: Glycyl lysine isopeptide (Lys-Gly) (interchain with G-Cter in ubiquitin). The segment covering 761–773 has biased composition (low complexity); that stretch reads SSTSSSIYSIETS. 2 stretches are compositionally biased toward polar residues: residues 774 to 810 and 827 to 845; these read PNID…SSHQ and NRSC…TLSH. Residues 850–860 show a composition bias toward low complexity; it reads PASDSSSSPPY. Positions 916-930 are enriched in basic and acidic residues; the sequence is PPARKSSFEKERPAK. 2 positions are modified to phosphoserine: Ser980 and Ser1022.

The protein belongs to the SEG1 family. In terms of assembly, component of eisosomes, large cytoplasmic protein assemblies that localize to specialized domains termed MCCs on the plasma membrane.

Its subcellular location is the cell membrane. Functionally, likely plays only a minor role in eisosome assembly. This chain is Eisosome protein SEG2 (SEG2), found in Saccharomyces cerevisiae (strain ATCC 204508 / S288c) (Baker's yeast).